Here is a 168-residue protein sequence, read N- to C-terminus: Small ribosomal subunit protein uS5 (168 aa).

The S5 DRBM domain maps to 13 to 76 (LKEQVVDIKR…EDAKKNLIHV (64 aa)).

It belongs to the universal ribosomal protein uS5 family. In terms of assembly, part of the 30S ribosomal subunit. Contacts proteins S4 and S8.

Functionally, with S4 and S12 plays an important role in translational accuracy. Its function is as follows. Located at the back of the 30S subunit body where it stabilizes the conformation of the head with respect to the body. The protein is Small ribosomal subunit protein uS5 of Alkaliphilus oremlandii (strain OhILAs) (Clostridium oremlandii (strain OhILAs)).